The following is a 279-amino-acid chain: Undecaprenyl-diphosphatase (279 aa).

8 helical membrane-spanning segments follow: residues 2–22 (LIIE…TEWL), 44–64 (AFIE…VMLI), 85–105 (WQLW…AVPL), 113–133 (FYFM…FIWI), 163–183 (VLSI…AIIL), 188–208 (TVAA…YSGL), 223–243 (AQVL…LLAI), and 255–275 (FTIF…YSFF).

It belongs to the UppP family.

It is found in the cell membrane. The enzyme catalyses di-trans,octa-cis-undecaprenyl diphosphate + H2O = di-trans,octa-cis-undecaprenyl phosphate + phosphate + H(+). In terms of biological role, catalyzes the dephosphorylation of undecaprenyl diphosphate (UPP). Confers resistance to bacitracin. This Streptococcus pyogenes serotype M12 (strain MGAS2096) protein is Undecaprenyl-diphosphatase.